A 143-amino-acid chain; its full sequence is Cofilin/actin-depolymerizing factor homolog 2 (143 aa).

The region spanning 4–141 is the ADF-H domain; that stretch reads GVKVSDECVY…FEDELRTIIL (138 aa).

It belongs to the actin-binding proteins ADF family. As to quaternary structure, interacts with monomeric actin, does not bind to actin polymers.

The protein resides in the cytoplasm. It localises to the cytoskeleton. Not involved in actin polymerisation, instead functions to stimulate nucleotide exchange on monomeric actin and influence turnover of the small amount of cytosolic actin microfilaments. Essential for erythrocytic schizogony. This Plasmodium falciparum (isolate 3D7) protein is Cofilin/actin-depolymerizing factor homolog 2.